A 523-amino-acid polypeptide reads, in one-letter code: Signal peptide peptidase-like 2A (523 aa).

A signal peptide spans 1-25; sequence MGLLHSLHAPAAALLWSCLLGLAAA. The Lumenal portion of the chain corresponds to 26–175; it reads QEAILHASTN…PSWPNFDYTL (150 aa). N-linked (GlcNAc...) asparagine glycosylation is found at N51, N61, N69, N119, N129, and N135. In terms of domain architecture, PA spans 70 to 155; the sequence is LTGTALCHLS…KDFKDMKETL (86 aa). The helical transmembrane segment at 176-196 threads the bilayer; it reads VVIFVIAVFTVALGGYWSGLI. Residues 197–224 are Cytoplasmic-facing; sequence ELENMKSVEDAEDRETRKKKDDYLTFSP. Residues 225 to 245 form a helical membrane-spanning segment; it reads LTVVVFVVICCIMIVLLYFFY. Over 246 to 247 the chain is Lumenal; it reads RW. A helical membrane pass occupies residues 248 to 268; that stretch reads LVYVMIAIFCIASSMSLYNCL. Over 269–288 the chain is Cytoplasmic; it reads SALIHRMPCGQCTILCCGKN. The helical transmembrane segment at 289–309 threads the bilayer; that stretch reads IKVSLIFLSGLCISVAVVWAV. The Lumenal portion of the chain corresponds to 310–315; it reads FRNEDR. A helical membrane pass occupies residues 316 to 336; sequence WAWILQDILGIAFCLNLIKTM. Over 337-344 the chain is Cytoplasmic; the sequence is KLPNFMSC. A helical transmembrane segment spans residues 345 to 365; the sequence is VILLGLLLIYDVFFVFITPFI. The active site involves D355. Residues 366–403 lie on the Lumenal side of the membrane; sequence TKNGESIMVELAAGPFENAEKLPVVIRVPKLMGYSVMS. A helical membrane pass occupies residues 404-424; sequence VCSVPVSVLGFGDIIVPGLLI. D416 is a catalytic residue. Residues 425–440 lie on the Cytoplasmic side of the membrane; that stretch reads AYCRRFDVQTGSSIYY. Residues 441–461 traverse the membrane as a helical segment; that stretch reads ISSTIAYAVGMIITFVVLMVM. Over 462 to 463 the chain is Lumenal; it reads KT. The helical transmembrane segment at 464–484 threads the bilayer; the sequence is GQPALLYLVPCTLITVSVVAW. Positions 466-468 match the PAL motif; that stretch reads PAL. Topologically, residues 485 to 523 are cytoplasmic; the sequence is SRKEMKKFWKGSSYQVMDHLDYSTNEENPVTTDEQIVQQ. Positions 498-501 match the YXXo lysosomal targeting motif motif; sequence YQVM.

The protein belongs to the peptidase A22B family. Interacts with ITM2B. In terms of processing, glycosylated.

It localises to the late endosome membrane. Its subcellular location is the lysosome membrane. The protein localises to the membrane. Functionally, intramembrane-cleaving aspartic protease (I-CLiP) that cleaves type II membrane signal peptides in the hydrophobic plane of the membrane. Functions in FASLG, ITM2B and TNF processing. Catalyzes the intramembrane cleavage of the anchored fragment of shed TNF-alpha (TNF), which promotes the release of the intracellular domain (ICD) for signaling to the nucleus. Also responsible for the intramembrane cleavage of Fas antigen ligand FASLG, which promotes the release of the intracellular FasL domain (FasL ICD). Essential for degradation of the invariant chain CD74 that plays a central role in the function of antigen-presenting cells in the immune system. Plays a role in the regulation of innate and adaptive immunity. This chain is Signal peptide peptidase-like 2A, found in Mus musculus (Mouse).